Here is a 116-residue protein sequence, read N- to C-terminus: Venom protein 54.1 (116 aa).

A signal peptide spans 1–19; that stretch reads MNFQVFSLIFFNFVYYCSC.

In terms of processing, contains 3 disulfide bonds. Expressed by the venom gland.

The protein resides in the secreted. The protein is Venom protein 54.1 of Lychas mucronatus (Chinese swimming scorpion).